The following is a 169-amino-acid chain: Transcription antitermination protein NusB (169 aa).

The segment at 150 to 169 (AAATSRRTETAGGESNDAGS) is disordered.

Belongs to the NusB family.

In terms of biological role, involved in transcription antitermination. Required for transcription of ribosomal RNA (rRNA) genes. Binds specifically to the boxA antiterminator sequence of the ribosomal RNA (rrn) operons. This is Transcription antitermination protein NusB from Rhodococcus jostii (strain RHA1).